We begin with the raw amino-acid sequence, 147 residues long: Large ribosomal subunit protein uL15 (147 aa).

A disordered region spans residues 1–65 (MQLHELKPAP…PLQRRLPKRG (65 aa)). Gly residues-rich tracts occupy residues 21–31 (QGIGSGLGKTA) and 42–52 (SGGGVRPGFEG).

It belongs to the universal ribosomal protein uL15 family. Part of the 50S ribosomal subunit.

Binds to the 23S rRNA. The polypeptide is Large ribosomal subunit protein uL15 (Heliobacterium modesticaldum (strain ATCC 51547 / Ice1)).